Reading from the N-terminus, the 373-residue chain is Glutamate 5-kinase (373 aa).

K16 lines the ATP pocket. Positions 56, 143, and 155 each coordinate substrate. Residue 175-176 participates in ATP binding; the sequence is TD. The PUA domain maps to 281–359; it reads RGVVTLDDGA…TKIETLLGYK (79 aa).

It belongs to the glutamate 5-kinase family.

Its subcellular location is the cytoplasm. The catalysed reaction is L-glutamate + ATP = L-glutamyl 5-phosphate + ADP. It functions in the pathway amino-acid biosynthesis; L-proline biosynthesis; L-glutamate 5-semialdehyde from L-glutamate: step 1/2. Functionally, catalyzes the transfer of a phosphate group to glutamate to form L-glutamate 5-phosphate. The sequence is that of Glutamate 5-kinase from Teredinibacter turnerae (strain ATCC 39867 / T7901).